The chain runs to 144 residues: Large ribosomal subunit protein uL16 (144 aa).

Positions 1–19 (MLLPKRVKYRRQHRPKTTG) are enriched in basic residues. Residues 1 to 23 (MLLPKRVKYRRQHRPKTTGRSKG) are disordered.

It belongs to the universal ribosomal protein uL16 family. In terms of assembly, part of the 50S ribosomal subunit.

Functionally, binds 23S rRNA and is also seen to make contacts with the A and possibly P site tRNAs. This chain is Large ribosomal subunit protein uL16, found in Staphylococcus carnosus (strain TM300).